A 47-amino-acid chain; its full sequence is Large ribosomal subunit protein bL33C (47 aa).

This sequence belongs to the bacterial ribosomal protein bL33 family.

The protein is Large ribosomal subunit protein bL33C of Staphylococcus epidermidis (strain ATCC 35984 / DSM 28319 / BCRC 17069 / CCUG 31568 / BM 3577 / RP62A).